Consider the following 137-residue polypeptide: Large ribosomal subunit protein bL12 (137 aa).

The protein belongs to the bacterial ribosomal protein bL12 family. As to quaternary structure, homodimer. Part of the ribosomal stalk of the 50S ribosomal subunit. Forms a multimeric L10(L12)X complex, where L10 forms an elongated spine to which 2 to 4 L12 dimers bind in a sequential fashion. Binds GTP-bound translation factors.

In terms of biological role, forms part of the ribosomal stalk which helps the ribosome interact with GTP-bound translation factors. Is thus essential for accurate translation. The chain is Large ribosomal subunit protein bL12 from Synechococcus sp. (strain JA-3-3Ab) (Cyanobacteria bacterium Yellowstone A-Prime).